Reading from the N-terminus, the 427-residue chain is Serine--tRNA ligase (427 aa).

231-233 lines the L-serine pocket; that stretch reads TAE. 262–264 provides a ligand contact to ATP; that stretch reads RSE. An L-serine-binding site is contributed by Glu285. 349–352 is an ATP binding site; it reads EISS. Ser385 is an L-serine binding site.

The protein belongs to the class-II aminoacyl-tRNA synthetase family. Type-1 seryl-tRNA synthetase subfamily. In terms of assembly, homodimer. The tRNA molecule binds across the dimer.

It is found in the cytoplasm. It catalyses the reaction tRNA(Ser) + L-serine + ATP = L-seryl-tRNA(Ser) + AMP + diphosphate + H(+). The catalysed reaction is tRNA(Sec) + L-serine + ATP = L-seryl-tRNA(Sec) + AMP + diphosphate + H(+). Its pathway is aminoacyl-tRNA biosynthesis; selenocysteinyl-tRNA(Sec) biosynthesis; L-seryl-tRNA(Sec) from L-serine and tRNA(Sec): step 1/1. Catalyzes the attachment of serine to tRNA(Ser). Is also able to aminoacylate tRNA(Sec) with serine, to form the misacylated tRNA L-seryl-tRNA(Sec), which will be further converted into selenocysteinyl-tRNA(Sec). This Listeria innocua serovar 6a (strain ATCC BAA-680 / CLIP 11262) protein is Serine--tRNA ligase.